Here is a 247-residue protein sequence, read N- to C-terminus: LHFPL tetraspan subfamily member 4 protein (247 aa).

A run of 4 helical transmembrane segments spans residues 22–42, 97–117, 127–147, and 178–198; these read IGVLWAIFTICFAIINVVVFI, FFVLLSMVLILGCITCFSLFF, ICAWMQLLAALCLVLGCMIFP, and ILAIIGILNALILSFLAFVLG.

The protein belongs to the LHFP family. In terms of assembly, interacts with GABA(A) receptor subunits. Identified in a complex of 720 kDa composed of LHFPL4, NLGN2, GABRA1, GABRB2, GABRG2 and GABRB3. Interacts with GABRB3. Interacts with GABRA2. Interacts with GABRG2. Interacts with GABRA1. Interacts with NLGN2; leading to mutual regulation of protein level and synaptic clustering.

Its subcellular location is the cell projection. The protein resides in the dendrite. The protein localises to the postsynaptic cell membrane. Its function is as follows. Plays a role in the regulation of inhibitory synapse formation and function by being involved in maintening gamma-aminobutyric acid receptors (GABAARs) clustering and their associated scaffold proteins at inhibitory synaptic sites. Acts in concert with NLGN2 to recruit or stabilize GABAARs. This Homo sapiens (Human) protein is LHFPL tetraspan subfamily member 4 protein.